The primary structure comprises 133 residues: Snaclec echicetin subunit alpha (133 aa).

3 disulfides stabilise this stretch: cysteine 4/cysteine 15, cysteine 31/cysteine 127, and cysteine 102/cysteine 119. Positions 11–128 constitute a C-type lectin domain; the sequence is YEGHCYQLFR…CEFKFPFVCK (118 aa).

It belongs to the snaclec family. As to quaternary structure, heterodimer of subunits alpha and beta; disulfide-linked. Forms an active complex with the pentameric immunoglobuline Mkappa (IgMkappa). Expressed by the venom gland.

The protein localises to the secreted. Its function is as follows. Echicetin itself inhibits aggregation of washed platelets induced by vWF, thrombin or alboaggregin-A. However, when complexed with the pentameric plasma immunoglobulin Mkappa (IgMkappa), echicetin binds specifically to GPIb and activates platelets. This is caused by P-selectin expression and activation of alpha-IIb/beta-3 as well as tyrosine phosphorylation of several signal transduction molecules, including p53/56(LYN), p64, p72(SYK), p70 to p90, and p120. In vivo, it induces thrombocytopenia when injected into mice, probably accounting of activation of platelets rather than inhibition. This chain is Snaclec echicetin subunit alpha, found in Echis carinatus sochureki (Saw-scaled viper).